The sequence spans 158 residues: SsrA-binding protein (158 aa).

The disordered stretch occupies residues Lys134–Gly158. Positions Asp137 to Arg149 are enriched in basic and acidic residues.

Belongs to the SmpB family.

Its subcellular location is the cytoplasm. In terms of biological role, required for rescue of stalled ribosomes mediated by trans-translation. Binds to transfer-messenger RNA (tmRNA), required for stable association of tmRNA with ribosomes. tmRNA and SmpB together mimic tRNA shape, replacing the anticodon stem-loop with SmpB. tmRNA is encoded by the ssrA gene; the 2 termini fold to resemble tRNA(Ala) and it encodes a 'tag peptide', a short internal open reading frame. During trans-translation Ala-aminoacylated tmRNA acts like a tRNA, entering the A-site of stalled ribosomes, displacing the stalled mRNA. The ribosome then switches to translate the ORF on the tmRNA; the nascent peptide is terminated with the 'tag peptide' encoded by the tmRNA and targeted for degradation. The ribosome is freed to recommence translation, which seems to be the essential function of trans-translation. This chain is SsrA-binding protein, found in Allorhizobium ampelinum (strain ATCC BAA-846 / DSM 112012 / S4) (Agrobacterium vitis (strain S4)).